Reading from the N-terminus, the 285-residue chain is Sulfoquinovosyl glycerol transport system permease protein SmoH (285 aa).

Helical transmembrane passes span 21–41 (FIAASILLVNGLFPAIWILFT), 83–103 (FMVALLSTALTILISVLAAYA), 115–135 (ILSLIIAVSTFPLVTLLVPLF), 150–170 (LILPYTVLSLPVCTLMLVSFF), 195–215 (VVVPLCAPGVFTAGILAFVNA), and 250–270 (PVISAALVVGIVPVAILIVIF). The ABC transmembrane type-1 domain maps to 79–270 (LFNSFMVALL…VPVAILIVIF (192 aa)).

Belongs to the binding-protein-dependent transport system permease family. In terms of assembly, the complex is probably composed of two ATP-binding proteins (SmoE), two transmembrane proteins (SmoG and SmoH) and a solute-binding protein (SmoF).

It is found in the cell inner membrane. In terms of biological role, part of the ABC transporter complex SmoEFGH involved in sulfoquinovosyl glycerol (SQGro) uptake. Responsible for the translocation of the substrate across the membrane. This is Sulfoquinovosyl glycerol transport system permease protein SmoH from Agrobacterium fabrum (strain C58 / ATCC 33970) (Agrobacterium tumefaciens (strain C58)).